A 77-amino-acid polypeptide reads, in one-letter code: Translation initiation factor IF-1, chloroplastic (77 aa).

The S1-like domain occupies Met1–Arg71.

This sequence belongs to the IF-1 family. Component of the 30S ribosomal translation pre-initiation complex which assembles on the 30S ribosome in the order IF-2 and IF-3, IF-1 and N-formylmethionyl-tRNA(fMet); mRNA recruitment can occur at any time during PIC assembly.

The protein localises to the plastid. Its subcellular location is the chloroplast. Its function is as follows. One of the essential components for the initiation of protein synthesis. Stabilizes the binding of IF-2 and IF-3 on the 30S subunit to which N-formylmethionyl-tRNA(fMet) subsequently binds. Helps modulate mRNA selection, yielding the 30S pre-initiation complex (PIC). Upon addition of the 50S ribosomal subunit IF-1, IF-2 and IF-3 are released leaving the mature 70S translation initiation complex. The sequence is that of Translation initiation factor IF-1, chloroplastic from Calycanthus floridus var. glaucus (Eastern sweetshrub).